A 539-amino-acid polypeptide reads, in one-letter code: MDVRRGGGGGRIVGAARRALTWGALPLPMRITNGLAMVSLVLSSCDLLRLCSDRERPLGGREFATVVCQLASVVYLLSLFAHPDAPATTTGDDDDGQGGSRRARPAAAEPAPMHGHGGGMMEADDEEIVAAVASGALPSHRLESRLGDCRRAARLRREALRRVTGRGVEGLPFDGMDYQAILGQCCEMPVGYVQLPVGVAGPLLLDGREYHVPMATTEGCLVASVNRGCRAISASGGAFSVLLRDAMSRAPAVKLPSAMRAAELKAFAEAPANFELLAAVFNRSSRFGRLQDIRCALAGRNLYMRFSCITGDAMGMNMVSKGVENVLGYLQNVFPDMDVISVSGNYCSDKKPTAVNWIEGRGKSVVCEAIIKGDVVQKVLKTTVEKLVELNIIKNLAGSAVAGALGGFNAHASNIVTALFIATGQDPAQNVESSQCITMLEEVDDGDDLHISVTMPSIEVGTIGGGTCLASQAACLNLLGVKGSNHGSPGANAKRLATIVAGSVLAGELSLLAALASGHLVKSHMMYNRSSKDVAKAAS.

The chain crosses the membrane as a helical span at residues 63 to 83 (FATVVCQLASVVYLLSLFAHP). The interval 84–124 (DAPATTTGDDDDGQGGSRRARPAAAEPAPMHGHGGGMMEAD) is linker. Residues 87–116 (ATTTGDDDDGQGGSRRARPAAAEPAPMHGH) form a disordered region. Over residues 105 to 114 (PAAAEPAPMH) the composition is skewed to low complexity. Residues 125–539 (DEEIVAAVAS…SSKDVAKAAS (415 aa)) form a catalytic region. E218 serves as the catalytic Charge relay system. Residue N282 is glycosylated (N-linked (GlcNAc...) asparagine). Catalysis depends on charge relay system residues K350 and D426. Residues 496–516 (LATIVAGSVLAGELSLLAALA) form a helical membrane-spanning segment. The active-site Proton donor is H524. N528 carries an N-linked (GlcNAc...) asparagine glycan.

Belongs to the HMG-CoA reductase family.

It localises to the endoplasmic reticulum membrane. It catalyses the reaction (R)-mevalonate + 2 NADP(+) + CoA = (3S)-3-hydroxy-3-methylglutaryl-CoA + 2 NADPH + 2 H(+). Its pathway is metabolic intermediate biosynthesis; (R)-mevalonate biosynthesis; (R)-mevalonate from acetyl-CoA: step 3/3. Catalyzes the synthesis of mevalonate. The specific precursor of all isoprenoid compounds present in plants. In Oryza sativa subsp. indica (Rice), this protein is 3-hydroxy-3-methylglutaryl-coenzyme A reductase 1 (HMG1).